The sequence spans 172 residues: Small ribosomal subunit protein uS4 (172 aa).

The region spanning R104–G168 is the S4 RNA-binding domain.

The protein belongs to the universal ribosomal protein uS4 family. As to quaternary structure, part of the 30S ribosomal subunit. Contacts protein S5. The interaction surface between S4 and S5 is involved in control of translational fidelity.

Its function is as follows. One of the primary rRNA binding proteins, it binds directly to 16S rRNA where it nucleates assembly of the body of the 30S subunit. With S5 and S12 plays an important role in translational accuracy. This Thermofilum pendens (strain DSM 2475 / Hrk 5) protein is Small ribosomal subunit protein uS4.